Here is a 302-residue protein sequence, read N- to C-terminus: Glutamyl-Q tRNA(Asp) synthetase (302 aa).

L-glutamate contacts are provided by residues 13-17 (RFAPS) and Asp-49. Positions 16 to 26 (PSPTGPLHLGS) match the 'HIGH' region motif. Residues Cys-105, Cys-107, Tyr-119, and Cys-123 each contribute to the Zn(2+) site. The L-glutamate site is built by Tyr-178 and Arg-196. Residues 234–238 (KLSKQ) carry the 'KMSKS' region motif. Residue Lys-237 participates in ATP binding.

It belongs to the class-I aminoacyl-tRNA synthetase family. GluQ subfamily. Zn(2+) serves as cofactor.

In terms of biological role, catalyzes the tRNA-independent activation of glutamate in presence of ATP and the subsequent transfer of glutamate onto a tRNA(Asp). Glutamate is transferred on the 2-amino-5-(4,5-dihydroxy-2-cyclopenten-1-yl) moiety of the queuosine in the wobble position of the QUC anticodon. This Methylococcus capsulatus (strain ATCC 33009 / NCIMB 11132 / Bath) protein is Glutamyl-Q tRNA(Asp) synthetase.